The following is an 81-amino-acid chain: uncharacterized protein (81 aa).

The next 2 helical transmembrane spans lie at 10–30 and 56–76; these read FFVL…FLLL and VLYL…AFAI.

The protein resides in the host membrane. This is an uncharacterized protein from Acidianus two-tailed virus (ATV).